Reading from the N-terminus, the 607-residue chain is MRLFTHGQVLALLAFVNTISAIPSFSTNSYPAHPAEPVSLVSQHQPQAPLGLWTRLRNSVIERVWGVPPQQRHRGGNKHQYPPFSAPASLRTRYGDDVVLRFKLQTADEVKALVEASNILFLDVWSSTDEWIDIRLAKDVVPSLLGLLPKSLQTTHVPLIRDLPQTIYESYPSPFQSSSGHERGFLPSGEPSSDATNIFFENYQPLSVIVPWMRLLASMFPSHAQFISIGSSFEGRDIPALRVGVRPANDQKPRRTLIIEGGSHAREWIGVSTVNYVAYSLITSYGKSKPISTLLEQFDFIFIPTINPDGYVYTWETDRLWRKNRQETSLPFCHGVDLDRTWGFEWNGNVTGDNPCLESYGGDKPFAGVEAHQLAEWVKEQTEQRNAKFVAFVDLHSYSQQILYPYSYSCLSQPPNLENLEELAMGIAKAIRLTNRKTYAVSSACGGLMASQKKKVKSETFLRMESTGGSALDWFYHDFGVKYAYQLKLRDRGSYGFLLPRENIVPTGNEVFNAVMMLGRFLLGKSRAFQELDWDAGFQRPNKDDKPILNDDDDDDNDDDDDDDDDADTNDDGIGRKDDSWVPDEYKGDNDRDESDGGWGFRRLRKR.

A signal peptide spans 1-21 (MRLFTHGQVLALLAFVNTISA). A propeptide spanning residues 22–174 (IPSFSTNSYP…QTIYESYPSP (153 aa)) is cleaved from the precursor. In terms of domain architecture, Peptidase M14 spans 202-522 (NYQPLSVIVP…NAVMMLGRFL (321 aa)). Residues histidine 264 and glutamate 267 each contribute to the Zn(2+) site. Substrate-binding positions include 264–267 (HARE), arginine 322, and 339–340 (DR). Cysteine 333 and cysteine 356 are joined by a disulfide. N-linked (GlcNAc...) asparagine glycosylation is present at asparagine 349. Position 396 (histidine 396) interacts with Zn(2+). 397–398 (SY) serves as a coordination point for substrate. Residues 539-607 (QRPNKDDKPI…GWGFRRLRKR (69 aa)) form a disordered region. A compositionally biased stretch (acidic residues) spans 550 to 571 (NDDDDDDNDDDDDDDDDADTND). Residues 573–590 (GIGRKDDSWVPDEYKGDN) show a composition bias toward basic and acidic residues.

This sequence belongs to the peptidase M14 family. Requires Zn(2+) as cofactor.

The protein localises to the vacuole. Its subcellular location is the secreted. Functionally, inactive carboxypeptidase that may play a role in cell wall organization and biogenesis. This Ajellomyces capsulatus (strain NAm1 / WU24) (Darling's disease fungus) protein is Inactive metallocarboxypeptidase ECM14 (ECM14).